The following is a 565-amino-acid chain: E3 ubiquitin-protein ligase RNF168 (565 aa).

The RING-type zinc-finger motif lies at 16-55; sequence CGICMEILLEPVTLPCNHTLCNPCFQSTVEKANLCCPFCR. The residue at position 70 (S70) is a Phosphoserine. Positions 110–128 match the LR motif 1 motif; it reads LSEPGELRREYEEEISRVE. The residue at position 134 (S134) is a Phosphoserine. The UMI motif motif lies at 143-151; sequence EEYIQRLLA. Disordered stretches follow at residues 150-223 and 252-302; these read LAEE…KTFG and SKET…PQLC. Residues 157 to 179 show a composition bias toward basic and acidic residues; it reads EKRQREKRRSEMEEQLRGDEELA. Residues 168 to 191 carry the MIU motif 1 motif; the sequence is MEEQLRGDEELARSLSTSINSNYE. Over residues 181–201 the composition is skewed to polar residues; the sequence is SLSTSINSNYERNTLASPLSS. Phosphoserine is present on S197. A Glycyl lysine isopeptide (Lys-Gly) (interchain with G-Cter in SUMO2) cross-link involves residue K210. The segment covering 275–293 has biased composition (polar residues); that stretch reads PTLSPQTCLETQEQGSESS. Residues S413 and S414 each carry the phosphoserine modification. The short motif at 438-461 is the MIU motif 2 element; the sequence is RHKQEEQDRLLALQLQKEVDKEQM. The interval 458-521 is disordered; it reads KEQMVPNRQK…TKGDYWEPFK (64 aa). Residues 465–476 carry the LR motif 2 motif; the sequence is RQKGSPDQYQLR. Polar residues predominate over residues 466–477; sequence QKGSPDQYQLRT. S469 carries the post-translational modification Phosphoserine. The segment covering 504 to 518 has biased composition (basic and acidic residues); sequence DHSKSPRNTKGDYWE. A Glycyl lysine isopeptide (Lys-Gly) (interchain with G-Cter in SUMO2) cross-link involves residue K525.

It belongs to the RNF168 family. In terms of assembly, monomer. Interacts with UBE2N/UBC13. In terms of processing, sumoylated with SUMO1 by PIAS4 in response to double-strand breaks (DSBs). Ubiquitinated.

The protein localises to the nucleus. It catalyses the reaction S-ubiquitinyl-[E2 ubiquitin-conjugating enzyme]-L-cysteine + [acceptor protein]-L-lysine = [E2 ubiquitin-conjugating enzyme]-L-cysteine + N(6)-ubiquitinyl-[acceptor protein]-L-lysine.. It functions in the pathway protein modification; protein ubiquitination. In terms of biological role, E3 ubiquitin-protein ligase required for accumulation of repair proteins to sites of DNA damage. Acts with UBE2N/UBC13 to amplify the RNF8-dependent histone ubiquitination. Recruited to sites of DNA damage at double-strand breaks (DSBs) by binding to ubiquitinated histone H2A and H2AX and amplifies the RNF8-dependent H2A ubiquitination, promoting the formation of 'Lys-63'-linked ubiquitin conjugates. This leads to concentrate ubiquitinated histones H2A and H2AX at DNA lesions to the threshold required for recruitment of TP53BP1 and BRCA1. Also recruited at DNA interstrand cross-links (ICLs) sites and promotes accumulation of 'Lys-63'-linked ubiquitination of histones H2A and H2AX, leading to recruitment of FAAP20 and Fanconi anemia (FA) complex, followed by interstrand cross-link repair. H2A ubiquitination also mediates the ATM-dependent transcriptional silencing at regions flanking DSBs in cis, a mechanism to avoid collision between transcription and repair intermediates. Also involved in class switch recombination in immune system, via its role in regulation of DSBs repair. Following DNA damage, promotes the ubiquitination and degradation of JMJD2A/KDM4A in collaboration with RNF8, leading to unmask H4K20me2 mark and promote the recruitment of TP53BP1 at DNA damage sites. Not able to initiate 'Lys-63'-linked ubiquitination in vitro; possibly due to partial occlusion of the UBE2N/UBC13-binding region. Catalyzes monoubiquitination of 'Lys-13' and 'Lys-15' of nucleosomal histone H2A (H2AK13Ub and H2AK15Ub, respectively). The protein is E3 ubiquitin-protein ligase RNF168 of Mus musculus (Mouse).